The chain runs to 359 residues: Protein LpfD (359 aa).

Positions 1-24 are cleaved as a signal peptide; that stretch reads MLKKLIMFTGLLGGSVLFSGQALA.

Belongs to the fimbrial protein family.

It is found in the fimbrium. This chain is Protein LpfD (lpfD), found in Salmonella typhimurium (strain LT2 / SGSC1412 / ATCC 700720).